We begin with the raw amino-acid sequence, 152 residues long: Protein SprT-like (152 aa).

One can recognise a SprT-like domain in the interval 7-148 (QRLVEEVSLQ…GKCKGKLNLI (142 aa)). Residue H67 participates in Zn(2+) binding. E68 is a catalytic residue. H71 provides a ligand contact to Zn(2+).

It belongs to the SprT family. The cofactor is Zn(2+).

The protein resides in the cytoplasm. This Bacillus cereus (strain 03BB102) protein is Protein SprT-like.